Consider the following 406-residue polypeptide: MSKLYVGSEVGQLRRVLLNRPERALTHLTPSNCHELLFDDVLLVEAAGKEHDAFADTLRQQGVEVLLLHDLMVDTLAVPEAKQWLLDVQISDFRYGPIFARDLRRYLSEMDNEHLATILLGGLAYSELPIQSASMLPRMKQPLDFVIEPLPNHLFTRDTSCWVYGGVSLNPMMKPARQRETNHLRAIYQWHPIFAGQDFIKYFGNEDLHYDNANIEGGDVLVIGKGAVLIGMSERTTPQGVENLAANLFRHGQAKEVIAIELPKHRSCMHLDTVMTHMDVDTFSVYPEIMRKDLHTWRLTPKGNGEMQVEALHNYLHAIERALGLNHLNIITTGGDSYEAEREQWNDANNVLTVKPGVVIGYERNVYTNEKYDKAGIEVLTIPGNELGRGRGGARCMSCPIERDDI.

Catalysis depends on cysteine 396, which acts as the Amidino-cysteine intermediate.

Belongs to the arginine deiminase family.

Its subcellular location is the cytoplasm. It carries out the reaction L-arginine + H2O = L-citrulline + NH4(+). It participates in amino-acid degradation; L-arginine degradation via ADI pathway; carbamoyl phosphate from L-arginine: step 1/2. This chain is Arginine deiminase, found in Vibrio vulnificus (strain YJ016).